A 536-amino-acid chain; its full sequence is MELTLWTYEGPPHVGAMRIASSMEGVHYVLHAPQGDTYADLLFTMIERRGRRPPVTYTTFQARDLGGDTAELVKGHLHEAVERFNPEALLVGESCTAELIQDQPGSLASGMGFNMPVVGIELPAYSKKENWGASETFYQLVRGILSKQPSEQSGVSHSPAAWKSQGRRPRVNLLGPTLLGFRCRDDILELEKLLNQHGIDVHVVAPLEARPADLMRLPNADLNVCLYPEIAEATCLWLERNYGMPFSKTVPIGVGATKDFLEELHQLLEMPAPNPGEGAEQSRLPWYSQSVDSNYLTGKRVFIFGDGTHALAAARIADQELGFKVVGLGTYSREMARPVRAAAKELGLEALISDDYLAVEAAMAEAAPELVLGTQMERHSAKRLGIPCAVISTPMHVQDVPARYSPQMGWEGANVIFDSWVHPLMMGLEEHLIGMFRHDFEFVDGHQSHLGHLGGHQSQTEQQQSQAATNPSTQSNADSSSEESPLWTPEGEAELAKIPFFVRGKVRRNTEKYARQAGCRCIDSETVYDAKVHFRA.

Residue Asp-36 participates in [4Fe-4S] cluster binding. The active-site Proton donor is the Asp-292. 427 to 428 provides a ligand contact to substrate; that stretch reads GL. The span at 448–469 shows a compositional bias: low complexity; the sequence is SHLGHLGGHQSQTEQQQSQAAT. Residues 448 to 489 form a disordered region; it reads SHLGHLGGHQSQTEQQQSQAATNPSTQSNADSSSEESPLWTP. The span at 470–483 shows a compositional bias: polar residues; that stretch reads NPSTQSNADSSSEE.

Belongs to the ChlB/BchB/BchZ family. As to quaternary structure, protochlorophyllide reductase is composed of three subunits; ChlL, ChlN and ChlB. Forms a heterotetramer of two ChlB and two ChlN subunits. It depends on [4Fe-4S] cluster as a cofactor.

It carries out the reaction chlorophyllide a + oxidized 2[4Fe-4S]-[ferredoxin] + 2 ADP + 2 phosphate = protochlorophyllide a + reduced 2[4Fe-4S]-[ferredoxin] + 2 ATP + 2 H2O. It functions in the pathway porphyrin-containing compound metabolism; chlorophyll biosynthesis (light-independent). Functionally, component of the dark-operative protochlorophyllide reductase (DPOR) that uses Mg-ATP and reduced ferredoxin to reduce ring D of protochlorophyllide (Pchlide) to form chlorophyllide a (Chlide). This reaction is light-independent. The NB-protein (ChlN-ChlB) is the catalytic component of the complex. This is Light-independent protochlorophyllide reductase subunit B from Prochlorococcus marinus (strain MIT 9313).